Here is a 748-residue protein sequence, read N- to C-terminus: CCR4-NOT transcription complex subunit 10-B (748 aa).

The span at 1–16 (MAADKAGEQGAEKHEG) shows a compositional bias: basic and acidic residues. Disordered regions lie at residues 1–25 (MAAD…GISD), 483–524 (KQEN…PPSS), and 605–634 (VSLG…KQIP). Polar residues-rich tracts occupy residues 487 to 509 (GSKA…VCSN) and 605 to 615 (VSLGVSSNEQE).

The protein belongs to the CNOT10 family. In terms of assembly, component of the CCR4-NOT complex. cnot10 and cnot11 form a subcomplex docked to the cnot1 scaffold.

Its subcellular location is the cytoplasm. The protein localises to the nucleus. Component of the CCR4-NOT complex which is one of the major cellular mRNA deadenylases and is linked to various cellular processes including bulk mRNA degradation, miRNA-mediated repression, translational repression during translational initiation and general transcription regulation. Additional complex functions may be a consequence of its influence on mRNA expression. Is not required for association of CNOT7 to the CCR4-NOT complex. This is CCR4-NOT transcription complex subunit 10-B (cnot10-b) from Xenopus laevis (African clawed frog).